Here is a 266-residue protein sequence, read N- to C-terminus: Glioma pathogenesis-related protein 1 (266 aa).

The first 21 residues, 1-21 (MRVTLATIAWMVSFVSNYSHT), serve as a signal peptide directing secretion. The SCP domain maps to 38–175 (VRIHNKFRSE…SNGAHFICNY (138 aa)). The chain crosses the membrane as a helical span at residues 233–255 (YTSLFLIVNSVILILSVIITILV).

The protein belongs to the CRISP family. According to PubMed:8973356, it is ubiquitously expressed with high levels in lung and kidney and low levels in heart and liver. Highly expressed in cell lines derived from nervous system tumors arising from glia, low or absent in non-glial-derived nervous system tumor cell lines. Also found in fetal kidney. According to PubMed:7607567 it is expressed only in brain tumor glioblastoma multiforme/astrocytoma and not in other nervous system tumors or normal fetal or adult tissues.

The protein resides in the membrane. The chain is Glioma pathogenesis-related protein 1 (GLIPR1) from Homo sapiens (Human).